We begin with the raw amino-acid sequence, 125 residues long: Large ribosomal subunit protein bL12 (125 aa).

The protein belongs to the bacterial ribosomal protein bL12 family. Homodimer. Part of the ribosomal stalk of the 50S ribosomal subunit. Forms a multimeric L10(L12)X complex, where L10 forms an elongated spine to which 2 to 4 L12 dimers bind in a sequential fashion. Binds GTP-bound translation factors.

Functionally, forms part of the ribosomal stalk which helps the ribosome interact with GTP-bound translation factors. Is thus essential for accurate translation. This chain is Large ribosomal subunit protein bL12, found in Campylobacter jejuni subsp. jejuni serotype O:2 (strain ATCC 700819 / NCTC 11168).